Consider the following 251-residue polypeptide: Triosephosphate isomerase (251 aa).

Residues Asn10 and Lys12 each coordinate substrate. His96 acts as the Electrophile in catalysis. The active-site Proton acceptor is the Glu168.

Belongs to the triosephosphate isomerase family. Homodimer.

It carries out the reaction D-glyceraldehyde 3-phosphate = dihydroxyacetone phosphate. The protein operates within carbohydrate biosynthesis; gluconeogenesis. Its pathway is carbohydrate degradation; glycolysis; D-glyceraldehyde 3-phosphate from glycerone phosphate: step 1/1. This Aspergillus oryzae (strain ATCC 42149 / RIB 40) (Yellow koji mold) protein is Triosephosphate isomerase (tpiA).